The following is a 394-amino-acid chain: Serine palmitoyltransferase (394 aa).

Pyridoxal 5'-phosphate is bound by residues 111 to 112 (GF), Ser183, His211, and Thr239. Lys242 is modified (N6-(pyridoxal phosphate)lysine).

Belongs to the class-II pyridoxal-phosphate-dependent aminotransferase family. The cofactor is pyridoxal 5'-phosphate.

The catalysed reaction is L-serine + hexadecanoyl-CoA + H(+) = 3-oxosphinganine + CO2 + CoA. Its pathway is lipid metabolism; sphingolipid metabolism. Functionally, involved in de novo bacterial ceramide synthesis. Catalyzes the condensation of L-serine with palmitoyl-CoA (hexadecanoyl-CoA) to produce 3-oxosphinganine. Also capable of using alanine as substrate leading to the formation of 1-deoxysphinganine (1-deoxySa). Contributes to the levels of endogenous sphingolipids in its host. This is Serine palmitoyltransferase from Bacteroides thetaiotaomicron (strain ATCC 29148 / DSM 2079 / JCM 5827 / CCUG 10774 / NCTC 10582 / VPI-5482 / E50).